A 345-amino-acid chain; its full sequence is Phosphoribosylformylglycinamidine cyclo-ligase (345 aa).

Belongs to the AIR synthase family.

The protein resides in the cytoplasm. The catalysed reaction is 2-formamido-N(1)-(5-O-phospho-beta-D-ribosyl)acetamidine + ATP = 5-amino-1-(5-phospho-beta-D-ribosyl)imidazole + ADP + phosphate + H(+). Its pathway is purine metabolism; IMP biosynthesis via de novo pathway; 5-amino-1-(5-phospho-D-ribosyl)imidazole from N(2)-formyl-N(1)-(5-phospho-D-ribosyl)glycinamide: step 2/2. This Ligilactobacillus salivarius (strain UCC118) (Lactobacillus salivarius) protein is Phosphoribosylformylglycinamidine cyclo-ligase.